We begin with the raw amino-acid sequence, 950 residues long: Oxysterol-binding protein-related protein 1 (950 aa).

Residues 1–237 (MNTEAEQQLL…NKVVHKALKR (237 aa)) form an interaction with RAB7A region. ANK repeat units follow at residues 47–76 (LGWT…KVNM), 80–109 (MGDT…DTTV), and 175–204 (LGNT…DPSL). The PH domain maps to 235–334 (LKRFEGPLWK…WLEAIEEHSA (100 aa)). The stretch at 430 to 463 (NFKLEQEQEKNKILSEALETLATEHHELERSLVE) forms a coiled coil. The FFAT signature appears at 469–483 (SILSEDEFYDALSGS). 2 disordered regions span residues 795–821 (KKNT…VPDS) and 881–913 (MENG…SEED). Residues 877–913 (DIRAMENGEIDQASEEKKRLEEKQRAARKNRSKSEED) adopt a coiled-coil conformation. Basic and acidic residues predominate over residues 890-901 (SEEKKRLEEKQR).

This sequence belongs to the OSBP family. In terms of assembly, interacts (via FFAT motif) with VAPA. Interacts (via FFAT motif) with VAPB. Interacts with the GTP-bound form of RAB7A. Interacts with OAS1B. Interacts (via FFAT motif) with MOSPD2 (via MSP domain). Detected in prostate and liver.

The protein resides in the late endosome. In terms of biological role, binds phospholipids; exhibits strong binding to phosphatidic acid and weak binding to phosphatidylinositol 3-phosphate. Stabilizes GTP-bound RAB7A on late endosomes/lysosomes and alters functional properties of late endocytic compartments via its interaction with RAB7A. Binds 25-hydroxycholesterol and cholesterol. This chain is Oxysterol-binding protein-related protein 1, found in Rattus norvegicus (Rat).